Consider the following 453-residue polypeptide: V-type proton ATPase subunit B (453 aa).

ATP is bound at residue R341.

Belongs to the ATPase alpha/beta chains family. In terms of assembly, V-ATPase is a heteromultimeric enzyme made up of two complexes: the ATP-hydrolytic V1 complex and the proton translocation V0 complex. The V1 complex consists of three catalytic AB heterodimers that form a heterohexamer, three peripheral stalks each consisting of EG heterodimers, one central rotor including subunits D and F, and the regulatory subunits C and H. The proton translocation complex V0 consists of the proton transport subunit a, a ring of proteolipid subunits c9c'', rotary subunit d, subunits e and f, and two accessory subunits.

Its function is as follows. Non-catalytic subunit of the V1 complex of vacuolar(H+)-ATPase (V-ATPase), a multisubunit enzyme composed of a peripheral complex (V1) that hydrolyzes ATP and a membrane integral complex (V0) that translocates protons. V-ATPase is responsible for acidifying and maintaining the pH of intracellular compartments and in some cell types, is targeted to the plasma membrane, where it is responsible for acidifying the extracellular environment. Essential for the proper assembly and activity of V-ATPase. This chain is V-type proton ATPase subunit B (ATP6V1B), found in Gallus gallus (Chicken).